The sequence spans 310 residues: Olfactory receptor 8B8 (310 aa).

The Extracellular portion of the chain corresponds to 1-27; sequence MATENASVPEFILAGLTDQPGLRMPLF. Asn5 carries N-linked (GlcNAc...) asparagine glycosylation. A helical membrane pass occupies residues 28–48; sequence FLFLGFYMVTMVGNLGLITLI. At 49–55 the chain is on the cytoplasmic side; sequence GLNSHLH. Residues 56-76 traverse the membrane as a helical segment; it reads TPMYFFLFNLSLIDFCYSTVI. Topologically, residues 77–98 are extracellular; it reads TPKMLVSFVSKKNIISYSGCMT. Cys96 and Cys188 are oxidised to a cystine. A helical membrane pass occupies residues 99–119; it reads QLFFFLFFVVSESFILSAMAY. At 120–140 the chain is on the cytoplasmic side; the sequence is DRYVAICNPLMYTVTMSPQVC. Residues 141–161 traverse the membrane as a helical segment; it reads LLLLLGVYVMGFAGAMAHTAF. The Extracellular portion of the chain corresponds to 162 to 195; sequence MVKLTFCADKLVNHYMCDILPLLERSCTSTYVNE. A helical transmembrane segment spans residues 196–216; that stretch reads LVVFIVVGIDIGVPTVTIFIS. Residues 217 to 238 lie on the Cytoplasmic side of the membrane; that stretch reads YALILSSILRISSTEGRSKAFS. Residues 239 to 259 form a helical membrane-spanning segment; it reads TCSSHIIAVSLFFGSGAFMYL. Residues 260–270 lie on the Extracellular side of the membrane; the sequence is KPSSLLPMNQG. A helical membrane pass occupies residues 271–291; the sequence is KVSSLFYTIVVPMLNPLIYSL. Residues 292-310 are Cytoplasmic-facing; it reads RNKDVKVALRKTLSRSSFS.

Belongs to the G-protein coupled receptor 1 family.

The protein resides in the cell membrane. In terms of biological role, odorant receptor. The polypeptide is Olfactory receptor 8B8 (Mus musculus (Mouse)).